The following is a 328-amino-acid chain: Malate dehydrogenase (328 aa).

Position 13–19 (13–19 (GGKGQIA)) interacts with NAD(+). Positions 94 and 100 each coordinate substrate. NAD(+) is bound by residues Asn-107, Gln-114, and 131–133 (VGN). Positions 133 and 164 each coordinate substrate. The active-site Proton acceptor is His-189.

Belongs to the LDH/MDH superfamily. MDH type 2 family.

The catalysed reaction is (S)-malate + NAD(+) = oxaloacetate + NADH + H(+). In terms of biological role, catalyzes the reversible oxidation of malate to oxaloacetate. The polypeptide is Malate dehydrogenase (Chlamydia pneumoniae (Chlamydophila pneumoniae)).